Reading from the N-terminus, the 177-residue chain is Large ribosomal subunit protein uL6 (177 aa).

The protein belongs to the universal ribosomal protein uL6 family. As to quaternary structure, part of the 50S ribosomal subunit.

Functionally, this protein binds to the 23S rRNA, and is important in its secondary structure. It is located near the subunit interface in the base of the L7/L12 stalk, and near the tRNA binding site of the peptidyltransferase center. This chain is Large ribosomal subunit protein uL6, found in Methylobacterium nodulans (strain LMG 21967 / CNCM I-2342 / ORS 2060).